The following is a 242-amino-acid chain: ATP synthase subunit a (242 aa).

The next 6 helical transmembrane spans lie at 29–49 (SSIYMLLASILALTYFYLAFY), 84–104 (FIPLVFSLFIFILFCNLLGMT), 114–134 (IIVTFTLAILVFLMVTIVGFV), 140–160 (FLTLFLPHGTPLWLAPLMIVI), 181–201 (MAGHVLLKVIAGFTVSLMIYL), and 203–223 (FLPIPIMVILIGFEIFVAILQ).

Belongs to the ATPase A chain family. F-type ATPases have 2 components, CF(1) - the catalytic core - and CF(0) - the membrane proton channel. CF(1) has five subunits: alpha(3), beta(3), gamma(1), delta(1), epsilon(1). CF(0) has three main subunits: a(1), b(2) and c(9-12). The alpha and beta chains form an alternating ring which encloses part of the gamma chain. CF(1) is attached to CF(0) by a central stalk formed by the gamma and epsilon chains, while a peripheral stalk is formed by the delta and b chains.

It localises to the cell inner membrane. Its function is as follows. Key component of the proton channel; it plays a direct role in the translocation of protons across the membrane. This is ATP synthase subunit a from Rickettsia conorii (strain ATCC VR-613 / Malish 7).